We begin with the raw amino-acid sequence, 711 residues long: Polyribonucleotide nucleotidyltransferase (711 aa).

Positions 486 and 492 each coordinate Mg(2+). The KH domain maps to 553–612 (PRIHTIKISTDKIKDVIGKGGSVIRALTEETGTTIEIEDDGTVKIAATDGEKAKYAIRRI). Residues 622 to 690 (GRIYNSKVTR…RQGRVRLSIK (69 aa)) form the S1 motif domain. The segment at 689–711 (IKEATEQSQPAAAPEAPASEQAE) is disordered. Residues 694–711 (EQSQPAAAPEAPASEQAE) show a composition bias toward low complexity.

The protein belongs to the polyribonucleotide nucleotidyltransferase family. Component of the RNA degradosome, which is a multiprotein complex involved in RNA processing and mRNA degradation. Mg(2+) is required as a cofactor.

The protein resides in the cytoplasm. The enzyme catalyses RNA(n+1) + phosphate = RNA(n) + a ribonucleoside 5'-diphosphate. Functionally, involved in mRNA degradation. Catalyzes the phosphorolysis of single-stranded polyribonucleotides processively in the 3'- to 5'-direction. This chain is Polyribonucleotide nucleotidyltransferase, found in Salmonella typhi.